We begin with the raw amino-acid sequence, 462 residues long: Fumarate hydratase class II (462 aa).

Substrate is bound by residues 97–99 (SGT), 128–131 (HPND), 138–140 (STN), and Thr186. The active-site Proton donor/acceptor is the His187. Residue Ser317 is part of the active site. Residues Ser318 and 323-325 (KVN) contribute to the substrate site.

The protein belongs to the class-II fumarase/aspartase family. Fumarase subfamily. In terms of assembly, homotetramer.

It localises to the cytoplasm. It carries out the reaction (S)-malate = fumarate + H2O. The protein operates within carbohydrate metabolism; tricarboxylic acid cycle; (S)-malate from fumarate: step 1/1. Functionally, involved in the TCA cycle. Catalyzes the stereospecific interconversion of fumarate to L-malate. This is Fumarate hydratase class II from Neisseria meningitidis serogroup A / serotype 4A (strain DSM 15465 / Z2491).